Here is a 252-residue protein sequence, read N- to C-terminus: Phosphoribosylaminoimidazole-succinocarboxamide synthase 1 (252 aa).

This sequence belongs to the SAICAR synthetase family.

The catalysed reaction is 5-amino-1-(5-phospho-D-ribosyl)imidazole-4-carboxylate + L-aspartate + ATP = (2S)-2-[5-amino-1-(5-phospho-beta-D-ribosyl)imidazole-4-carboxamido]succinate + ADP + phosphate + 2 H(+). It participates in purine metabolism; IMP biosynthesis via de novo pathway; 5-amino-1-(5-phospho-D-ribosyl)imidazole-4-carboxamide from 5-amino-1-(5-phospho-D-ribosyl)imidazole-4-carboxylate: step 1/2. This Caulobacter vibrioides (strain ATCC 19089 / CIP 103742 / CB 15) (Caulobacter crescentus) protein is Phosphoribosylaminoimidazole-succinocarboxamide synthase 1 (purC1).